Reading from the N-terminus, the 947-residue chain is Valine--tRNA ligase (947 aa).

The short motif at 45 to 55 (PNVTGSLHMGH) is the 'HIGH' region element. The 'KMSKS' region motif lies at 591 to 595 (KMSKS). Residue Lys594 participates in ATP binding.

The protein belongs to the class-I aminoacyl-tRNA synthetase family. ValS type 1 subfamily. Monomer.

The protein localises to the cytoplasm. The enzyme catalyses tRNA(Val) + L-valine + ATP = L-valyl-tRNA(Val) + AMP + diphosphate. Functionally, catalyzes the attachment of valine to tRNA(Val). As ValRS can inadvertently accommodate and process structurally similar amino acids such as threonine, to avoid such errors, it has a 'posttransfer' editing activity that hydrolyzes mischarged Thr-tRNA(Val) in a tRNA-dependent manner. The chain is Valine--tRNA ligase from Rhizobium meliloti (strain 1021) (Ensifer meliloti).